The primary structure comprises 337 residues: Protein RETICULATA-RELATED 3, chloroplastic (337 aa).

The transit peptide at 1–59 (MAAMAAKLQLSAKSDQSSVRLPRVINLSRDPTTRVSFPRNGSVCSLHTNFSSPHLAKPC) directs the protein to the chloroplast. Over residues 70 to 89 (NNGGGSGSGGGGGGFGGSGG) the composition is skewed to gly residues. The interval 70-96 (NNGGGSGSGGGGGGFGGSGGEASEESS) is disordered. The next 2 helical transmembrane spans lie at 151–171 (FVFS…YMLA) and 216–236 (VFAS…NGLI).

Belongs to the RETICULATA family. As to expression, expressed in root meristem, root vasculature, distal region of young leaf primordia, leaf bundle sheath cells, hydathodes and pollen grains.

Its subcellular location is the plastid. The protein localises to the chloroplast membrane. Its function is as follows. May play a role in leaf development. Required for leaf mesophyll cell division in the early stages of leaf organogenesis. The sequence is that of Protein RETICULATA-RELATED 3, chloroplastic from Arabidopsis thaliana (Mouse-ear cress).